Consider the following 500-residue polypeptide: Organic cation/carnitine transporter 7 (500 aa).

Residues 1-23 (MADGNTRFTVDEALVAMGFGKFQ) lie on the Cytoplasmic side of the membrane. A helical membrane pass occupies residues 24-44 (IYVLAYAGMGWVAEAMEMMLL). Over 45 to 62 (SFVGPAVQSLWNLSARQE) the chain is Extracellular. Asparagine 56 carries N-linked (GlcNAc...) asparagine glycosylation. Residues 63–83 (SLITSVVFAGMLIGAYSWGIV) traverse the membrane as a helical segment. Residues 84 to 97 (SDKHGRRKGFIITA) are Cytoplasmic-facing. Residues 98 to 118 (VVTFVAGFLSAFSPNYMWLII) form a helical membrane-spanning segment. Residues 119–120 (LR) lie on the Extracellular side of the membrane. Residues 121 to 141 (CLVGLGLGGGPVLASWYLEFI) form a helical membrane-spanning segment. Residue 137-144 (YLEFIPAP) coordinates ATP. Residues 142–150 (PAPSRGTWM) are Cytoplasmic-facing. The helical transmembrane segment at 151–171 (VVFSAFWTVGTIFEASLAWLV) threads the bilayer. Topologically, residues 172–174 (MPR) are extracellular. A helical transmembrane segment spans residues 175–195 (LGWRWLLAFSSVPSSLLLLFY). Topologically, residues 196-293 (RWTSESPRYL…ALLSPTLMKR (98 aa)) are cytoplasmic. A helical membrane pass occupies residues 294 to 314 (TLLLWVVFFGNAFAYYGVVLL). The Extracellular segment spans residues 315-341 (TTELNNSHNRCYPTEKQLRNSNDVNYR). The N-linked (GlcNAc...) asparagine glycan is linked to asparagine 319. A helical transmembrane segment spans residues 342 to 362 (DVFIASFAEFPGLLISAAMVD). Topologically, residues 363 to 367 (RLGRK) are cytoplasmic. The helical transmembrane segment at 368-387 (ASMASMLFTCCIFLLPLLSH) threads the bilayer. At 388 to 401 (QSPFITTVLLFGGR) the chain is on the extracellular side. The helical transmembrane segment at 402–422 (ICISAAFTVVYIYAPEIYPTA) threads the bilayer. Residues 423-429 (VRTTGVG) are Cytoplasmic-facing. Residues 430 to 450 (VGSSVGRIGGILCPLVAVGLV) traverse the membrane as a helical segment. The Extracellular portion of the chain corresponds to 451–456 (HGCHQT). A helical transmembrane segment spans residues 457-477 (IAVLLFEVVILVSGICVCLFP). Topologically, residues 478–500 (FETSGRDLTDSISASKEPPSASV) are cytoplasmic.

The protein belongs to the major facilitator (TC 2.A.1) superfamily. Organic cation transporter (TC 2.A.1.19) family. Expressed in pollen.

The protein localises to the membrane. In terms of biological role, high affinity carnitine transporter involved in the active cellular uptake of carnitine. Also transports organic cations. The polypeptide is Organic cation/carnitine transporter 7 (OCT7) (Arabidopsis thaliana (Mouse-ear cress)).